A 219-amino-acid chain; its full sequence is 2-hydroxy-3-keto-5-methylthiopentenyl-1-phosphate phosphatase (219 aa).

Belongs to the HAD-like hydrolase superfamily. MtnX family.

It catalyses the reaction 2-hydroxy-5-methylsulfanyl-3-oxopent-1-enyl phosphate + H2O = 1,2-dihydroxy-5-(methylsulfanyl)pent-1-en-3-one + phosphate. It functions in the pathway amino-acid biosynthesis; L-methionine biosynthesis via salvage pathway; L-methionine from S-methyl-5-thio-alpha-D-ribose 1-phosphate: step 4/6. In terms of biological role, dephosphorylates 2-hydroxy-3-keto-5-methylthiopentenyl-1-phosphate (HK-MTPenyl-1-P) yielding 1,2-dihydroxy-3-keto-5-methylthiopentene (DHK-MTPene). This chain is 2-hydroxy-3-keto-5-methylthiopentenyl-1-phosphate phosphatase, found in Bacillus cereus (strain B4264).